A 76-amino-acid polypeptide reads, in one-letter code: DNA-directed RNA polymerase subunit epsilon (76 aa).

It belongs to the RNA polymerase subunit epsilon family. RNAP is composed of a core of 2 alpha, a beta and a beta' subunit. The core is associated with a delta subunit, and at least one of epsilon or omega. When a sigma factor is associated with the core the holoenzyme is formed, which can initiate transcription.

The enzyme catalyses RNA(n) + a ribonucleoside 5'-triphosphate = RNA(n+1) + diphosphate. Its function is as follows. A non-essential component of RNA polymerase (RNAP). The protein is DNA-directed RNA polymerase subunit epsilon of Streptococcus equi subsp. zooepidemicus (strain H70).